The primary structure comprises 1578 residues: Formin-2 (1578 aa).

3 stretches are compositionally biased toward basic and acidic residues: residues 1–17 (MGNQ…DASH), 26–35 (AGPRDAEITK), and 57–66 (TSKKKSKSDS). The disordered stretch occupies residues 1 to 73 (MGNQDGKLKR…SDSRASVFSN (73 aa)). Position 89 is a phosphoserine (Ser-89). Disordered stretches follow at residues 208-230 (KLLL…QPGA), 244-383 (EAEK…PSPR), and 401-458 (RQLS…GLSR). 2 stretches are compositionally biased toward polar residues: residues 273–282 (SSGSHLTSET) and 290–300 (SAVTDSLSSPA). A compositionally biased stretch (acidic residues) spans 322 to 333 (DTDEECEEDAFE). Residues 351–364 (ASQRLEKEPEEGMR) are compositionally biased toward basic and acidic residues. Composition is skewed to low complexity over residues 404–418 (SSPN…NQSP) and 427–442 (SVSR…AAAP). A phosphoserine mark is found at Ser-459, Ser-489, and Ser-493. The tract at residues 587–634 (SMDYSEGQFPRREPSMWPSSKLPEEEPSPKDVDTEPKSSILESPKKCS) is disordered. The span at 608-622 (LPEEEPSPKDVDTEP) shows a compositional bias: basic and acidic residues. Residues 643–683 (DVKSEGQATVIQQLEQTIEDLRTKIAELEKQYPALDLEGPR) are a coiled coil. Disordered stretches follow at residues 714–765 (RTLE…SGPQ), 786–836 (DAQQ…GNNC), and 880–944 (PALQ…MGIS). The FH1 domain maps to 735–1124 (PPPKAPPEGL…GCGFLFPPLP (390 aa)). Residues 786 to 795 (DAQQIQSASQ) show a composition bias toward polar residues. A compositionally biased stretch (low complexity) spans 803–817 (LGSDSQGQPSQPSLH). Over residues 818–827 (TESETSHEHS) the composition is skewed to basic and acidic residues. The segment covering 893-944 (LPAPPQPPPLPGLGVPPPPPAPPLPGMGIPPPPPLPGMGIPPPPPLPGMGIS) has biased composition (pro residues). 12 repeat units span residues 919 to 929 (MGIPPPPPLPG), 930 to 940 (MGIPPPPPLPG), 941 to 951 (MGISPLPPLPG), 952 to 962 (MGIPPPPPLPG), 963 to 973 (VGIPPPPPLPG), 974 to 984 (VGIPPPPPLPG), 985 to 995 (VGIPPPPPLPG), 996 to 1006 (VGIPPPPPLPG), 1007 to 1017 (VGIPPPPPLPG), 1018 to 1028 (VGIPPPPPLPG), 1029 to 1039 (VGIPPPPPLPG), and 1040 to 1050 (VGIPPPPPLPG). The 12 X 11 AA tandem repeats of [MV]-G-I-P-P-P-P-P-L-P-G stretch occupies residues 919-1039 (MGIPPPPPLP…GIPPPPPLPG (121 aa)). Pro residues predominate over residues 1037–1097 (LPGVGIPPPP…PPPPLLPGSG (61 aa)). The tract at residues 1037–1108 (LPGVGIPPPP…PHSSQVGSST (72 aa)) is disordered. The FH2 domain occupies 1139-1554 (RKQLIEPCRP…KEAEEVCRQK (416 aa)). The stretch at 1419–1455 (QELFQASQMKFEDFQKDLRKLKKDLKACEAEAGKVYQ) forms a coiled coil. Residues 1571–1578 (KAKISMKT) are important for interaction with SPIRE1.

Belongs to the formin homology family. Cappuccino subfamily. As to quaternary structure, interacts with SPIRE1. Binds actin. Interacts with CDKN1A. Detected in brain and in oocytes (at protein level). Expressed almost exclusively in the developing and mature central nervous system. Detected in oocytes.

Its subcellular location is the cytoplasm. It localises to the cytoskeleton. It is found in the cytosol. The protein resides in the perinuclear region. The protein localises to the nucleus. Its subcellular location is the nucleolus. It localises to the cell membrane. It is found in the cell cortex. The protein resides in the cytoplasmic vesicle membrane. Actin-binding protein that is involved in actin cytoskeleton assembly and reorganization. Acts as an actin nucleation factor and promotes assembly of actin filaments together with SPIRE1 and SPIRE2. Involved in intracellular vesicle transport along actin fibers, providing a novel link between actin cytoskeleton dynamics and intracellular transport. Required for asymmetric spindle positioning, asymmetric oocyte division and polar body extrusion during female germ cell meiosis. Plays a role in responses to DNA damage, cellular stress and hypoxia by protecting CDKN1A against degradation, and thereby plays a role in stress-induced cell cycle arrest. Also acts in the nucleus: together with SPIRE1 and SPIRE2, promotes assembly of nuclear actin filaments in response to DNA damage in order to facilitate movement of chromatin and repair factors after DNA damage. Protects cells against apoptosis by protecting CDKN1A against degradation. This chain is Formin-2 (Fmn2), found in Mus musculus (Mouse).